We begin with the raw amino-acid sequence, 354 residues long: GTPase Obg (354 aa).

Residues 1 to 159 (MKFVDEVKIH…RDLVLELKLL (159 aa)) form the Obg domain. Residues 160-333 (ADVGIVGYPN…LLDAVGRALF (174 aa)) enclose the OBG-type G domain. GTP contacts are provided by residues 166-173 (GYPNAGKS), 191-195 (FTTLT), 212-215 (DIPG), 283-286 (TKID), and 314-316 (SAV). Residues serine 173 and threonine 193 each coordinate Mg(2+).

This sequence belongs to the TRAFAC class OBG-HflX-like GTPase superfamily. OBG GTPase family. In terms of assembly, monomer. Mg(2+) is required as a cofactor.

The protein resides in the cytoplasm. In terms of biological role, an essential GTPase which binds GTP, GDP and possibly (p)ppGpp with moderate affinity, with high nucleotide exchange rates and a fairly low GTP hydrolysis rate. Plays a role in control of the cell cycle, stress response, ribosome biogenesis and in those bacteria that undergo differentiation, in morphogenesis control. This is GTPase Obg from Anaeromyxobacter sp. (strain K).